A 56-amino-acid chain; its full sequence is Ovomucoid (56 aa).

Residues 6-56 (VDCSEYPKPACTLEYRPLCGSDSKTYANKCNFCNAVVESNGTLTLSHFGKC) enclose the Kazal-like domain. 3 disulfides stabilise this stretch: cysteine 8–cysteine 38, cysteine 16–cysteine 35, and cysteine 24–cysteine 56. Residue asparagine 45 is glycosylated (N-linked (GlcNAc...) asparagine).

Its subcellular location is the secreted. This chain is Ovomucoid, found in Oreortyx pictus (Mountain quail).